A 478-amino-acid polypeptide reads, in one-letter code: JmjC domain-containing histone demethylation protein 1 (478 aa).

The segment at valine 6–histidine 70 adopts a PHD-type zinc-finger fold. One can recognise a JmjC domain in the interval serine 242–histidine 401. Threonine 294 provides a ligand contact to substrate. Fe cation is bound by residues histidine 297 and aspartate 299. Lysine 314 contributes to the substrate binding site. Histidine 369 contacts Fe cation.

This sequence belongs to the JHDM1 histone demethylase family. Fe(2+) is required as a cofactor.

The protein localises to the nucleus. The catalysed reaction is N(6),N(6)-dimethyl-L-lysyl(36)-[histone H3] + 2 2-oxoglutarate + 2 O2 = L-lysyl(36)-[histone H3] + 2 formaldehyde + 2 succinate + 2 CO2. Its function is as follows. Histone demethylase that specifically demethylates 'Lys-36' of histone H3, thereby playing a central role in histone code. In Kluyveromyces lactis (strain ATCC 8585 / CBS 2359 / DSM 70799 / NBRC 1267 / NRRL Y-1140 / WM37) (Yeast), this protein is JmjC domain-containing histone demethylation protein 1 (JHD1).